A 287-amino-acid polypeptide reads, in one-letter code: Uroplakin-3a (287 aa).

Residues 1-18 (MPPLWALLALGCLRFGSA) form the signal peptide. Residues 19–207 (VNLQPQLASV…DTWPGRRSGG (189 aa)) are Lumenal-facing. 3 N-linked (GlcNAc...) asparagine glycosylation sites follow: asparagine 74, asparagine 139, and asparagine 170. Residues 208–235 (MIVITSILGSLPFFLLVGFAGAIALSLV) form a helical membrane-spanning segment. Residues 236-287 (DMGSSDGETTHDSQITQEAVPKSLGASESSYTSVNRGPPLDRAEVYSSKLQD) lie on the Cytoplasmic side of the membrane. The tract at residues 242–287 (GETTHDSQITQEAVPKSLGASESSYTSVNRGPPLDRAEVYSSKLQD) is disordered. Polar residues predominate over residues 261–270 (ASESSYTSVN).

The protein belongs to the uroplakin-3 family. In terms of assembly, heterodimer with uroplakin-1B (UPK1B). In terms of tissue distribution, expressed in ureter.

Its subcellular location is the endoplasmic reticulum membrane. Component of the asymmetric unit membrane (AUM); a highly specialized biomembrane elaborated by terminally differentiated urothelial cells. May play an important role in AUM-cytoskeleton interaction in terminally differentiated urothelial cells. It also contributes to the formation of urothelial glycocalyx which may play an important role in preventing bacterial adherence. This Homo sapiens (Human) protein is Uroplakin-3a (UPK3A).